Consider the following 272-residue polypeptide: Probable prolyl 4-hydroxylase 11 (272 aa).

The Cytoplasmic portion of the chain corresponds to 1-55 (MSKSTSVSTILYLRQRLQGLKIYETSDLIQHINTFDELVGEQVSVDVKIEEKTKD). A helical; Signal-anchor for type II membrane protein transmembrane segment spans residues 56-80 (MILLCSLSPLLTTLTCSMVKVAASL). Residues 81–272 (RFPNERWLEV…KRHCLSLNLF (192 aa)) are Lumenal-facing. Positions 179 to 272 (NGETLQVINY…KRHCLSLNLF (94 aa)) constitute a Fe2OG dioxygenase domain. 3 residues coordinate Fe cation: H197, D199, and H261.

This sequence belongs to the P4HA family. It depends on Fe(2+) as a cofactor. Requires L-ascorbate as cofactor.

It is found in the endoplasmic reticulum membrane. The catalysed reaction is L-prolyl-[collagen] + 2-oxoglutarate + O2 = trans-4-hydroxy-L-prolyl-[collagen] + succinate + CO2. Catalyzes the post-translational formation of 4-hydroxyproline in -Xaa-Pro-Gly- sequences in proline-rich peptide sequences of plant glycoproteins and other proteins. Hydroxyprolines are important constituent of many plant cell wall glycoproteins such as extensins, hydroxyproline-rich glycoproteins, lectins and arabinogalactan proteins. This is Probable prolyl 4-hydroxylase 11 from Arabidopsis thaliana (Mouse-ear cress).